The primary structure comprises 146 residues: Hemoglobin subunit beta (146 aa).

The Globin domain occupies 2–146; that stretch reads HWSAEEKQLI…VAHALARKYH (145 aa). His-63 and His-92 together coordinate heme b.

The protein belongs to the globin family. As to quaternary structure, heterotetramer of two alpha chains and two beta chains. Red blood cells.

Involved in oxygen transport from the lung to the various peripheral tissues. The polypeptide is Hemoglobin subunit beta (HBB) (Stercorarius maccormicki (South polar skua)).